The sequence spans 408 residues: Guanine nucleotide-binding protein alpha-14 subunit (408 aa).

GTP-binding positions include histidine 39 to lysine 46, glycine 79 to serine 86, threonine 201 to aspartate 205, valine 216 to threonine 222, aspartate 241 to glutamine 245, phenylalanine 285 to phenylalanine 288, asparagine 325 to aspartate 328, and alanine 380. A G-alpha domain is found at serine 71–serine 408. A G1 motif region spans residues lysine 74–threonine 87. Serine 86 provides a ligand contact to Mg(2+). The G2 motif stretch occupies residues aspartate 214–threonine 222. Threonine 222 serves as a coordination point for Mg(2+). The G3 motif stretch occupies residues leucine 237–arginine 246. The segment at leucine 321–aspartate 328 is G4 motif. The tract at residues threonine 378 to threonine 383 is G5 motif.

Belongs to the G-alpha family. G proteins are composed of 3 units; alpha, beta and gamma. The alpha chain contains the guanine nucleotide binding site. Interacts with the dopamine receptor dop-2 (via C-terminus); the interaction is direct.

In terms of biological role, guanine nucleotide-binding proteins (G proteins) are involved as modulators or transducers in various transmembrane signaling systems. In association with the G-protein coupled dopamine receptor dop-2, modulates two types of learning: touch habituation and chemosensory associative conditioning. This Caenorhabditis elegans protein is Guanine nucleotide-binding protein alpha-14 subunit.